Here is a 292-residue protein sequence, read N- to C-terminus: Syntaxin-19 (292 aa).

One can recognise a t-SNARE coiled-coil homology domain in the interval 207–269; it reads LSEIEQRHKE…NNTKEKFGLA (63 aa).

This sequence belongs to the syntaxin family. Interacts with EGFR. In terms of tissue distribution, expressed in stomach, lung and skin (at protein level). In stomach, strongly expressed in the mucosa of the fundus, in epithelial cells of gastric pits, and in gastric glands (at protein level). In skin, expressed in the epidermis, dermis, and epithelial layer of the hair bulb (at protein level).

It localises to the cell membrane. The protein localises to the cytoplasm. Functionally, plays a role in endosomal trafficking of the epidermal growth factor receptor (EGFR). The sequence is that of Syntaxin-19 from Mus musculus (Mouse).